The chain runs to 402 residues: Serine/threonine-protein phosphatase 4 regulatory subunit 2 (402 aa).

Residues 206–248 (MDEEFEDEDYEDHEDEEEDEEDEDNDSDVDEMEAEEVEEDASD) show a composition bias toward acidic residues. 3 disordered regions span residues 206 to 270 (MDEE…DVTD), 291 to 311 (SVLS…ILSR), and 331 to 402 (GFIT…KKRM). A compositionally biased stretch (low complexity) spans 348-358 (SSSSMVSPVVS). Residues 371 to 396 (INTFISPDTTNSVTQAEKNELSTSPL) show a composition bias toward polar residues.

Belongs to the PPP4R2 family. In terms of assembly, regulatory subunit (R2) of the histone H2A phosphatase complex (HTP-C) consisting of PPH3, PSY2 and PSY4.

The protein resides in the nucleus. Its function is as follows. Regulatory subunit of the histone H2A phosphatase complex, which dephosphorylates H2AS128ph (gamma-H2A) that has been displaced from sites of DNA lesions in the double-stranded DNA break repair process. Dephosphorylation is necessary for efficient recovery from the DNA damage checkpoint. The polypeptide is Serine/threonine-protein phosphatase 4 regulatory subunit 2 (PSY4) (Kluyveromyces lactis (strain ATCC 8585 / CBS 2359 / DSM 70799 / NBRC 1267 / NRRL Y-1140 / WM37) (Yeast)).